The following is a 208-amino-acid chain: FMN-dependent NADH:quinone oxidoreductase 4 (208 aa).

This sequence belongs to the azoreductase type 1 family. In terms of assembly, homodimer. FMN serves as cofactor.

It carries out the reaction 2 a quinone + NADH + H(+) = 2 a 1,4-benzosemiquinone + NAD(+). The catalysed reaction is N,N-dimethyl-1,4-phenylenediamine + anthranilate + 2 NAD(+) = 2-(4-dimethylaminophenyl)diazenylbenzoate + 2 NADH + 2 H(+). Functionally, quinone reductase that provides resistance to thiol-specific stress caused by electrophilic quinones. In terms of biological role, also exhibits azoreductase activity. Catalyzes the reductive cleavage of the azo bond in aromatic azo compounds to the corresponding amines. This is FMN-dependent NADH:quinone oxidoreductase 4 from Bacillus cereus (strain ATCC 10987 / NRS 248).